Here is a 131-residue protein sequence, read N- to C-terminus: Peptidyl-prolyl cis-trans isomerase NIMA-interacting 4 (131 aa).

Residues 1 to 25 form a necessary for nuclear localization and DNA-binding region; the sequence is MPPKGKSGSGKGGKGGAASGSDSAD. Residues 1–39 form a disordered region; it reads MPPKGKSGSGKGGKGGAASGSDSADKKSQGPKGGGNAVK. Residues 1-41 are necessary for association with the pre-rRNP complexes; sequence MPPKGKSGSGKGGKGGAASGSDSADKKSQGPKGGGNAVKVR. The span at 7–18 shows a compositional bias: gly residues; it reads SGSGKGGKGGAA. Position 19 is a phosphoserine; by CK2 (Ser-19). One can recognise a PpiC domain in the interval 35 to 129; it reads GNAVKVRHIL…FGYHIIMVEG (95 aa).

It belongs to the PpiC/parvulin rotamase family. PIN4 subfamily. As to quaternary structure, found in pre-ribosomal ribonucleoprotein (pre-rRNP) complexes. Post-translationally, phosphorylated. Phosphorylation occurs both in the nucleus and the cytoplasm. Phosphorylation at Ser-19 does not affect its PPIase activity but is required for nuclear localization, and the dephosphorylation is a prerequisite for the binding to DNA. The unphosphorylated form associates with the pre-rRNP complexes in the nucleus.

The protein localises to the nucleus. Its subcellular location is the nucleolus. It is found in the cytoplasm. The protein resides in the cytoskeleton. It localises to the spindle. The catalysed reaction is [protein]-peptidylproline (omega=180) = [protein]-peptidylproline (omega=0). Involved as a ribosomal RNA processing factor in ribosome biogenesis. Binds to tightly bent AT-rich stretches of double-stranded DNA. The protein is Peptidyl-prolyl cis-trans isomerase NIMA-interacting 4 (Pin4) of Mus musculus (Mouse).